The sequence spans 282 residues: NADH-ubiquinone oxidoreductase chain 2 (282 aa).

7 consecutive transmembrane segments (helical) span residues 17-37, 58-78, 87-107, 115-135, 166-186, 202-222, and 232-252; these read ILTN…VVFI, SLGL…IILL, FWIF…FLTF, ILLQ…LLIC, FSMF…VLLI, TTLV…IFSL, and FTLF…FWLI.

It belongs to the complex I subunit 2 family.

Its subcellular location is the mitochondrion inner membrane. It catalyses the reaction a ubiquinone + NADH + 5 H(+)(in) = a ubiquinol + NAD(+) + 4 H(+)(out). Its function is as follows. Core subunit of the mitochondrial membrane respiratory chain NADH dehydrogenase (Complex I) that is believed to belong to the minimal assembly required for catalysis. Complex I functions in the transfer of electrons from NADH to the respiratory chain. The immediate electron acceptor for the enzyme is believed to be ubiquinone. This is NADH-ubiquinone oxidoreductase chain 2 from Caenorhabditis elegans.